A 201-amino-acid chain; its full sequence is Peptide deformylase (201 aa).

Positions 1-21 (MANHFSQLAKKSRTNGNAEKI) are disordered. Fe cation-binding residues include C121 and H163. The active site involves E164. Fe cation is bound at residue H167.

It belongs to the polypeptide deformylase family. Requires Fe(2+) as cofactor.

It catalyses the reaction N-terminal N-formyl-L-methionyl-[peptide] + H2O = N-terminal L-methionyl-[peptide] + formate. Removes the formyl group from the N-terminal Met of newly synthesized proteins. Requires at least a dipeptide for an efficient rate of reaction. N-terminal L-methionine is a prerequisite for activity but the enzyme has broad specificity at other positions. The sequence is that of Peptide deformylase from Prochlorococcus marinus (strain AS9601).